The primary structure comprises 370 residues: Developmentally-regulated GTP-binding protein 1 homolog (370 aa).

An OBG-type G domain is found at 65 to 292; the sequence is ARVGLIGFPS…LLDKIWEYLK (228 aa). GTP is bound by residues 71 to 78, 117 to 121, and 250 to 253; these read GFPSVGKS, DLPGI, and NKID. The 78-residue stretch at 292 to 369 folds into the TGS domain; sequence KLIRVYTKPK…ADEDIVQIVK (78 aa).

This sequence belongs to the TRAFAC class OBG-HflX-like GTPase superfamily. OBG GTPase family.

The chain is Developmentally-regulated GTP-binding protein 1 homolog (drg1) from Dictyostelium discoideum (Social amoeba).